Reading from the N-terminus, the 459-residue chain is Elongation factor 1-alpha 4 (459 aa).

Positions Lys5 to Thr242 constitute a tr-type G domain. The segment at Gly14–Ser21 is G1. Residues Gly70–Asp74 are G2. The segment at Asp91–Gly94 is G3. Positions Asn153 to Asp156 are G4. The tract at residues Ser194–Phe196 is G5. 2 positions are modified to 5-glutamyl glycerylphosphorylethanolamine: Glu301 and Glu374.

The protein belongs to the TRAFAC class translation factor GTPase superfamily. Classic translation factor GTPase family. EF-Tu/EF-1A subfamily.

It localises to the cytoplasm. Its function is as follows. This protein promotes the GTP-dependent binding of aminoacyl-tRNA to the A-site of ribosomes during protein biosynthesis. In Oscheius tipulae, this protein is Elongation factor 1-alpha 4 (eft-4).